Here is an 85-residue protein sequence, read N- to C-terminus: UPF0386 protein Bind_1628 (85 aa).

This sequence belongs to the UPF0386 family.

This Beijerinckia indica subsp. indica (strain ATCC 9039 / DSM 1715 / NCIMB 8712) protein is UPF0386 protein Bind_1628.